Here is a 132-residue protein sequence, read N- to C-terminus: Large ribosomal subunit protein bL12 (132 aa).

Belongs to the bacterial ribosomal protein bL12 family. Homodimer. Part of the ribosomal stalk of the 50S ribosomal subunit. Forms a multimeric L10(L12)X complex, where L10 forms an elongated spine to which 2 to 4 L12 dimers bind in a sequential fashion. Binds GTP-bound translation factors.

Forms part of the ribosomal stalk which helps the ribosome interact with GTP-bound translation factors. Is thus essential for accurate translation. This is Large ribosomal subunit protein bL12 from Chloroflexus aggregans (strain MD-66 / DSM 9485).